The sequence spans 185 residues: Ribosome-recycling factor (185 aa).

Residues 138-159 (KVKKLEKDKEISEDESKKAQEQ) are disordered.

Belongs to the RRF family.

Its subcellular location is the cytoplasm. Responsible for the release of ribosomes from messenger RNA at the termination of protein biosynthesis. May increase the efficiency of translation by recycling ribosomes from one round of translation to another. The protein is Ribosome-recycling factor of Helicobacter acinonychis (strain Sheeba).